Here is a 465-residue protein sequence, read N- to C-terminus: tRNA modification GTPase MnmE (465 aa).

(6S)-5-formyl-5,6,7,8-tetrahydrofolate-binding residues include R30, E92, and R132. The TrmE-type G domain maps to 227 to 388 (GLQVALVGRP…LIEAVLKTCG (162 aa)). N237 serves as a coordination point for K(+). GTP contacts are provided by residues 237–242 (NVGKSS), 256–262 (TDLPGTT), 281–284 (DTAG), and 342–345 (NKAD). S241 is a Mg(2+) binding site. K(+) contacts are provided by T256, L258, and T261. T262 serves as a coordination point for Mg(2+). K465 serves as a coordination point for (6S)-5-formyl-5,6,7,8-tetrahydrofolate.

This sequence belongs to the TRAFAC class TrmE-Era-EngA-EngB-Septin-like GTPase superfamily. TrmE GTPase family. As to quaternary structure, homodimer. Heterotetramer of two MnmE and two MnmG subunits. K(+) is required as a cofactor.

The protein resides in the cytoplasm. Functionally, exhibits a very high intrinsic GTPase hydrolysis rate. Involved in the addition of a carboxymethylaminomethyl (cmnm) group at the wobble position (U34) of certain tRNAs, forming tRNA-cmnm(5)s(2)U34. This chain is tRNA modification GTPase MnmE, found in Prochlorococcus marinus (strain MIT 9303).